A 455-amino-acid chain; its full sequence is MLYFFGNSRFFLFFFYFFFYFVLVIKSSVGKNEYVSPDELNIKTSGFLGYKCDFSTEGIHNLEPDIVERRSVICSINSYFIYDKIKLIIPKQDDPKSKFKLLPENCFAKVYSDIEGKTEIPIEQTGLIEYTLEENDTNQDYSERIIQISPFNNKDIEFYCICDNTEQVISHIDGRSALVHVTVLKYPHKIVSVNLTDQKYPYLFDAYNKNDFINYKLEIGLKEGELLVLACKQIDNKCFQKNDESKNGDLYKTNKIIYHKDFAIFKAPIYVKSNNATAECKCKIDEANIYTLVVKPDYDEKVIYGCNFSKDLSFRTFTNNMNLLKYNENTNINCNVEISQPFYDHLIGISCPGTIIPDCFFQIYKPLTNELKSSEITYLDSQLNIGNIEYYEDIHGNNEIRIFSIVGAIPQSASFTCMCKMDKITGFMNIKIGSAYYAFLSKLFIIFIPLFFMWL.

The signal sequence occupies residues 1 to 30 (MLYFFGNSRFFLFFFYFFFYFVLVIKSSVG). The 139-residue stretch at 48–186 (LGYKCDFSTE…ALVHVTVLKY (139 aa)) folds into the 6-Cys 1 domain. 2 disulfides stabilise this stretch: Cys-52-Cys-74 and Cys-106-Cys-160. Asn-135, Asn-194, Asn-275, and Asn-307 each carry an N-linked (GlcNAc...) asparagine glycan. Residues 302 to 433 (VIYGCNFSKD…ITGFMNIKIG (132 aa)) form the 6-Cys 2 domain. 3 disulfide bridges follow: Cys-306–Cys-334, Cys-351–Cys-419, and Cys-359–Cys-417. Gly-433 carries the GPI-anchor amidated glycine lipid modification. A propeptide spans 434 to 455 (SAYYAFLSKLFIIFIPLFFMWL) (removed in mature form).

Heterodimer; heterodimerizes with PF230.

The protein resides in the cell surface. It is found in the cell membrane. In terms of biological role, gametocyte surface protein required for male fertility. The protein is Gametocyte surface protein P45/48 (PB45/48) of Plasmodium berghei (strain Anka).